The primary structure comprises 384 residues: Spermidine/putrescine import ATP-binding protein PotA (384 aa).

The ABC transporter domain maps to 6–238 (ITFNNVSKTF…PINHFVANFI (233 aa)). 40–47 (GASGSGKS) contributes to the ATP binding site.

It belongs to the ABC transporter superfamily. Spermidine/putrescine importer (TC 3.A.1.11.1) family. As to quaternary structure, the complex is composed of two ATP-binding proteins (PotA), two transmembrane proteins (PotB and PotC) and a solute-binding protein (PotD).

The protein localises to the cell membrane. It catalyses the reaction ATP + H2O + polyamine-[polyamine-binding protein]Side 1 = ADP + phosphate + polyamineSide 2 + [polyamine-binding protein]Side 1.. Its function is as follows. Part of the ABC transporter complex PotABCD involved in spermidine/putrescine import. Responsible for energy coupling to the transport system. The sequence is that of Spermidine/putrescine import ATP-binding protein PotA from Streptococcus pyogenes serotype M28 (strain MGAS6180).